A 99-amino-acid chain; its full sequence is MNPENYLYLSVLLFTIGAAGVLLRRNAIVVFMCIELMLNAANLAFVTFARMHGNLDGQIFAFFTMVVAAAEVVVGLAIIMIIFRSRRSVSVDDADLLKY.

3 consecutive transmembrane segments (helical) span residues 3-23 (PENYLYLSVLLFTIGAAGVLL), 28-48 (IVVFMCIELMLNAANLAFVTF), and 62-82 (FFTMVVAAAEVVVGLAIIMII).

This sequence belongs to the complex I subunit 4L family. In terms of assembly, NDH-1 is composed of 14 different subunits. Subunits NuoA, H, J, K, L, M, N constitute the membrane sector of the complex.

It is found in the cell membrane. The enzyme catalyses a quinone + NADH + 5 H(+)(in) = a quinol + NAD(+) + 4 H(+)(out). In terms of biological role, NDH-1 shuttles electrons from NADH, via FMN and iron-sulfur (Fe-S) centers, to quinones in the respiratory chain. The immediate electron acceptor for the enzyme in this species is believed to be a menaquinone. Couples the redox reaction to proton translocation (for every two electrons transferred, four hydrogen ions are translocated across the cytoplasmic membrane), and thus conserves the redox energy in a proton gradient. This is NADH-quinone oxidoreductase subunit K from Rhodococcus erythropolis (strain PR4 / NBRC 100887).